A 208-amino-acid chain; its full sequence is Protein-L-isoaspartate O-methyltransferase (208 aa).

Ser-59 is an active-site residue.

The protein belongs to the methyltransferase superfamily. L-isoaspartyl/D-aspartyl protein methyltransferase family.

The protein resides in the cytoplasm. It catalyses the reaction [protein]-L-isoaspartate + S-adenosyl-L-methionine = [protein]-L-isoaspartate alpha-methyl ester + S-adenosyl-L-homocysteine. In terms of biological role, catalyzes the methyl esterification of L-isoaspartyl residues in peptides and proteins that result from spontaneous decomposition of normal L-aspartyl and L-asparaginyl residues. It plays a role in the repair and/or degradation of damaged proteins. The chain is Protein-L-isoaspartate O-methyltransferase from Aliivibrio salmonicida (strain LFI1238) (Vibrio salmonicida (strain LFI1238)).